The following is a 172-amino-acid chain: Large ribosomal subunit protein uL10 (172 aa).

The protein belongs to the universal ribosomal protein uL10 family. Part of the ribosomal stalk of the 50S ribosomal subunit. The N-terminus interacts with L11 and the large rRNA to form the base of the stalk. The C-terminus forms an elongated spine to which L12 dimers bind in a sequential fashion forming a multimeric L10(L12)X complex.

Forms part of the ribosomal stalk, playing a central role in the interaction of the ribosome with GTP-bound translation factors. The polypeptide is Large ribosomal subunit protein uL10 (Chlorobium luteolum (strain DSM 273 / BCRC 81028 / 2530) (Pelodictyon luteolum)).